The chain runs to 204 residues: MIGRLQGKLIEKQPPEILLDVQGIGYELLLPMTSFYNLPDTGQECTVFTHLVVREDAHLLFGFSTKTDRTLFRELIKTNGVGPKLALAILSAMSVHEFAYAIEREELSKLVKIPGVGKKTAERLLVELKGKFKGLRQPDFFVESKHITVPDIVSAEKETPNDEAVAALVALGYKPPEAAKMVKKVANGDLTSEQLIREALKAAL.

The segment at 1–64 (MIGRLQGKLI…EDAHLLFGFS (64 aa)) is domain I. Residues 65 to 143 (TKTDRTLFRE…GLRQPDFFVE (79 aa)) are domain II. The flexible linker stretch occupies residues 144-155 (SKHITVPDIVSA). The tract at residues 156-204 (EKETPNDEAVAALVALGYKPPEAAKMVKKVANGDLTSEQLIREALKAAL) is domain III.

It belongs to the RuvA family. As to quaternary structure, homotetramer. Forms an RuvA(8)-RuvB(12)-Holliday junction (HJ) complex. HJ DNA is sandwiched between 2 RuvA tetramers; dsDNA enters through RuvA and exits via RuvB. An RuvB hexamer assembles on each DNA strand where it exits the tetramer. Each RuvB hexamer is contacted by two RuvA subunits (via domain III) on 2 adjacent RuvB subunits; this complex drives branch migration. In the full resolvosome a probable DNA-RuvA(4)-RuvB(12)-RuvC(2) complex forms which resolves the HJ.

The protein localises to the cytoplasm. Its function is as follows. The RuvA-RuvB-RuvC complex processes Holliday junction (HJ) DNA during genetic recombination and DNA repair, while the RuvA-RuvB complex plays an important role in the rescue of blocked DNA replication forks via replication fork reversal (RFR). RuvA specifically binds to HJ cruciform DNA, conferring on it an open structure. The RuvB hexamer acts as an ATP-dependent pump, pulling dsDNA into and through the RuvAB complex. HJ branch migration allows RuvC to scan DNA until it finds its consensus sequence, where it cleaves and resolves the cruciform DNA. The chain is Holliday junction branch migration complex subunit RuvA from Actinobacillus succinogenes (strain ATCC 55618 / DSM 22257 / CCUG 43843 / 130Z).